The following is a 384-amino-acid chain: 8-amino-7-oxononanoate synthase (384 aa).

Residue Arg-21 participates in substrate binding. 108 to 109 (GF) is a pyridoxal 5'-phosphate binding site. Residue His-133 coordinates substrate. Ser-179, His-207, and Thr-233 together coordinate pyridoxal 5'-phosphate. Lys-236 carries the N6-(pyridoxal phosphate)lysine modification. Residue Thr-352 coordinates substrate.

The protein belongs to the class-II pyridoxal-phosphate-dependent aminotransferase family. BioF subfamily. In terms of assembly, homodimer. Requires pyridoxal 5'-phosphate as cofactor.

The enzyme catalyses 6-carboxyhexanoyl-[ACP] + L-alanine + H(+) = (8S)-8-amino-7-oxononanoate + holo-[ACP] + CO2. It participates in cofactor biosynthesis; biotin biosynthesis. Its function is as follows. Catalyzes the decarboxylative condensation of pimeloyl-[acyl-carrier protein] and L-alanine to produce 8-amino-7-oxononanoate (AON), [acyl-carrier protein], and carbon dioxide. This is 8-amino-7-oxononanoate synthase from Shigella dysenteriae serotype 1 (strain Sd197).